We begin with the raw amino-acid sequence, 182 residues long: Nucleoside triphosphate/diphosphate phosphatase (182 aa).

R27 functions as the Proton donor in the catalytic mechanism. Mg(2+) is bound by residues N91, D107, D109, D111, D124, and E127.

The protein belongs to the Ntdp family. Mg(2+) serves as cofactor.

The enzyme catalyses a ribonucleoside 5'-triphosphate + H2O = a ribonucleoside 5'-diphosphate + phosphate + H(+). The catalysed reaction is a ribonucleoside 5'-diphosphate + H2O = a ribonucleoside 5'-phosphate + phosphate + H(+). Functionally, has nucleoside phosphatase activity towards nucleoside triphosphates and nucleoside diphosphates. In Lactiplantibacillus plantarum (strain ATCC BAA-793 / NCIMB 8826 / WCFS1) (Lactobacillus plantarum), this protein is Nucleoside triphosphate/diphosphate phosphatase.